A 740-amino-acid chain; its full sequence is Catalase-peroxidase (740 aa).

An N-terminal signal peptide occupies residues 1 to 27 (MFKSTLPIAAAISVALTSMVLPAKALA). A cross-link (tryptophyl-tyrosyl-methioninium (Trp-Tyr) (with M-254)) is located at residues 106-228 (WHSAGVYRVH…LAAVEMGLIY (123 aa)). Histidine 107 serves as the catalytic Proton acceptor. The segment at residues 228-254 (YVNPEGPHGKPDPLLAANDIRMSFGRM) is a cross-link (tryptophyl-tyrosyl-methioninium (Tyr-Met) (with W-106)). Residue histidine 269 coordinates heme b.

This sequence belongs to the peroxidase family. Peroxidase/catalase subfamily. Homodimer or homotetramer. Heme b serves as cofactor. In terms of processing, formation of the three residue Trp-Tyr-Met cross-link is important for the catalase, but not the peroxidase activity of the enzyme.

The catalysed reaction is H2O2 + AH2 = A + 2 H2O. It catalyses the reaction 2 H2O2 = O2 + 2 H2O. Bifunctional enzyme with both catalase and broad-spectrum peroxidase activity. The sequence is that of Catalase-peroxidase from Colwellia psychrerythraea (strain 34H / ATCC BAA-681) (Vibrio psychroerythus).